Consider the following 430-residue polypeptide: Palmitoyltransferase ZDHHC11 (430 aa).

Residues 1 to 46 (MTNLNCFGRHRRRTAPHNATGSRSELVAPPIHSRINGWSSPLHSFQ) are Cytoplasmic-facing. A helical transmembrane segment spans residues 47 to 67 (FIALLIFSFMAIVAFGIYVPL). The Lumenal segment spans residues 68–76 (LPAPWSYAA). A helical membrane pass occupies residues 77 to 97 (YALIGSAFVLHLFSHVTAVTI). Topologically, residues 98–176 (DPADVNVRRR…GGRNYWFFFT (79 aa)) are cytoplasmic. The 51-residue stretch at 129 to 179 (LHCTLCEVDVSPKAKHCSTCNKCIADFDHHCKWLNNCVGGRNYWFFFTAVS) folds into the DHHC domain. Cysteine 159 acts as the S-palmitoyl cysteine intermediate in catalysis. Residues 177-197 (AVSSAVIGVILLIPLVLFVFI) form a helical membrane-spanning segment. The Lumenal segment spans residues 198 to 234 (EHYVNPAVLRTAPQFQTVKGNGTWLVFLPVAPVETSS). A helical transmembrane segment spans residues 235-255 (ISLLVVSFITALLSLAALLLL). Residues 256–430 (CHLLCFHIYL…QYLHFKQKMP (175 aa)) are Cytoplasmic-facing.

The protein belongs to the DHHC palmitoyltransferase family.

It localises to the endoplasmic reticulum membrane. The catalysed reaction is L-cysteinyl-[protein] + hexadecanoyl-CoA = S-hexadecanoyl-L-cysteinyl-[protein] + CoA. Endoplasmic reticulum-localized palmitoyltransferase that could catalyze the addition of palmitate onto protein substrates. The sequence is that of Palmitoyltransferase ZDHHC11 from Danio rerio (Zebrafish).